The chain runs to 220 residues: N-(5'-phosphoribosyl)anthranilate isomerase (220 aa).

Belongs to the TrpF family.

It carries out the reaction N-(5-phospho-beta-D-ribosyl)anthranilate = 1-(2-carboxyphenylamino)-1-deoxy-D-ribulose 5-phosphate. It functions in the pathway amino-acid biosynthesis; L-tryptophan biosynthesis; L-tryptophan from chorismate: step 3/5. The polypeptide is N-(5'-phosphoribosyl)anthranilate isomerase (Bordetella petrii (strain ATCC BAA-461 / DSM 12804 / CCUG 43448)).